A 346-amino-acid polypeptide reads, in one-letter code: Integrin beta-1-binding protein 2 (346 aa).

Zn(2+) contacts are provided by C5, C10, C24, and H27. A CHORD 1 domain is found at 5-64 (CHNKGCGQHFDPQTNLPDSCCHHPGVPVFHDALKGWSCCRKRTVDFSEFLNIKGCTVGPH). The SH3-binding motif lies at 28-31 (PGVP). Residues C42, C43, C59, and H64 each contribute to the Zn(2+) site. An SH3-binding motif is present at residues 70–78 (PEAPQPEGP). Residues 70–113 (PEAPQPEGPATSSSLLEQKPPNTIPKSAETLRRERPKSDLPPKL) are disordered. Residues 79–94 (ATSSSLLEQKPPNTIP) are compositionally biased toward polar residues. Over residues 98 to 109 (ETLRRERPKSDL) the composition is skewed to basic and acidic residues. 2 residues coordinate Zn(2+): C150 and C155. The CHORD 2 domain occupies 150–209 (CQNPGCDAVYQGSESDATPCTYHPGAPRFHEGMKSWSCCGIQTLDFGVFLAQPGCRVGRH). An SH2-binding motif is present at residues 159 to 162 (YQGS). Residues C169 and H172 each contribute to the Zn(2+) site. The short motif at 173–176 (PGAP) is the SH3-binding element. Zn(2+) is bound by residues C187, C188, C204, and H209. One can recognise a CS domain in the interval 216–305 (LASCRHDWHQ…ADPGFWAQLE (90 aa)). Positions 235–238 (YGQI) match the SH2-binding motif. Residues 311 to 346 (AEKSKSGVGLEMDEEESEDSDDDLSWTEEEEEAMGE) form a disordered region. Over residues 321–346 (EMDEEESEDSDDDLSWTEEEEEAMGE) the composition is skewed to acidic residues.

In terms of assembly, interacts with beta-1 integrin subunit. This interaction is regulated by divalent cations, and it occurs only in absence of calcium.

In terms of biological role, may play a role during maturation and/or organization of muscles cells. This chain is Integrin beta-1-binding protein 2 (ITGB1BP2), found in Sus scrofa (Pig).